A 1014-amino-acid chain; its full sequence is Regulator of telomere elongation helicase 1 homolog (1014 aa).

A Helicase ATP-binding domain is found at 7 to 324 (AGIPVHFPFE…KEMLLELEKA (318 aa)). 42–49 (SPTGTGKT) is an ATP binding site. C147, C165, C174, and C210 together coordinate [4Fe-4S] cluster. The DEAH box motif lies at 253–256 (DEAH). T873 carries the post-translational modification Phosphothreonine. The tract at residues 891 to 917 (TDMVKTEPGTSNSCSYGNTSSSGSDSR) is disordered. Residues 899-917 (GTSNSCSYGNTSSSGSDSR) are compositionally biased toward low complexity.

The protein belongs to the helicase family. RAD3/XPD subfamily.

Its subcellular location is the nucleus. The catalysed reaction is ATP + H2O = ADP + phosphate + H(+). Its function is as follows. A probable ATP-dependent DNA helicase implicated in DNA repair and the maintenance of genomic stability. Acts as an anti-recombinase to counteract toxic recombination and limit crossover during meiosis. Regulates meiotic recombination and crossover homeostasis by physically dissociating strand invasion events and thereby promotes noncrossover repair by meiotic synthesis dependent strand annealing (SDSA) as well as disassembly of D loop recombination intermediates. This is Regulator of telomere elongation helicase 1 homolog from Drosophila mojavensis (Fruit fly).